We begin with the raw amino-acid sequence, 428 residues long: Gamma-glutamyl phosphate reductase (428 aa).

It belongs to the gamma-glutamyl phosphate reductase family.

It is found in the cytoplasm. It carries out the reaction L-glutamate 5-semialdehyde + phosphate + NADP(+) = L-glutamyl 5-phosphate + NADPH + H(+). The protein operates within amino-acid biosynthesis; L-proline biosynthesis; L-glutamate 5-semialdehyde from L-glutamate: step 2/2. Functionally, catalyzes the NADPH-dependent reduction of L-glutamate 5-phosphate into L-glutamate 5-semialdehyde and phosphate. The product spontaneously undergoes cyclization to form 1-pyrroline-5-carboxylate. This chain is Gamma-glutamyl phosphate reductase, found in Streptomyces coelicolor (strain ATCC BAA-471 / A3(2) / M145).